We begin with the raw amino-acid sequence, 476 residues long: MASPFSGALQLTDLDDFIAPSQDCIKPMKVDRRPGSGVAKIHIEDDGSYFQVSQDGGMKKLEKAKISLDDCLACSGCVTSAETVLITQQSHEELRKVLGANKTAAPDQQKLVVISVSPQSRASLAVRFQLNPTDTARKLTAFFKKIGAHYVFDTAFSRNFSLLESQREFVRRFRGQADPEQALPVLTSACPGWICYAEKTHGSTLLPHISTARSPQQVMGSLVKDFFAQQQHLTPDKVYHATVMPCYDKKLEASRPDFFSQEHQTRDVDCVITTGEVFKLLEEEGVSLSELEPAPLDSLCSSASAQEPTSHQGGGSGGYLEHVFRHAAQELFGIHVTEVTYRPLRNKDLQEVILEREGQVLLHFAAAYGFRNIQNLVQKLKRGRCPYHYVEVMACPAGCLNGGGQLKAPDMPGKELLQQVERLYGLVRTEAPEDAPGIQELYERWLQGAGSERAGRLLHTSYHAVEKAGSGLSIRW.

At A2 the chain carries N-acetylalanine. Residues C24, C71, C74, C77, C190, C246, C395, and C399 each coordinate [4Fe-4S] cluster.

This sequence belongs to the NARF family. In terms of assembly, external component of the CIA complex. In the CIA complex, interacts directly with CIAO1 and MMS19.

In terms of biological role, component of the cytosolic iron-sulfur protein assembly (CIA) complex, a multiprotein complex that mediates the incorporation of iron-sulfur cluster into extramitochondrial Fe/S proteins. Seems to negatively regulate the level of HIF1A expression, although this effect could be indirect. This Bos taurus (Bovine) protein is Cytosolic iron-sulfur assembly component 3.